The chain runs to 285 residues: Chitinase 4 (285 aa).

The N-terminal stretch at 1–27 (MAAKMATMVALVFGLALLLSAAAPAAA) is a signal peptide. One can recognise a Chitin-binding type-1 domain in the interval 28–62 (QNCGCQDGYCCSQWGYCGTTEAYCGQGCQSGPCWG). Cystine bridges form between C30–C38, C32–C44, C37–C51, C55–C60, C104–C153, C166–C175, and C253–C285. E148 (proton donor) is an active-site residue.

The protein belongs to the glycosyl hydrolase 19 family. Chitinase class IV subfamily. In terms of tissue distribution, expressed at low levels in leaves, sheaths and meristems.

It carries out the reaction Random endo-hydrolysis of N-acetyl-beta-D-glucosaminide (1-&gt;4)-beta-linkages in chitin and chitodextrins.. Hydrolyzes chitin and may function in reproductive organs during embryogenesis and seed maturation. In Oryza sativa subsp. japonica (Rice), this protein is Chitinase 4 (Cht4).